The following is a 335-amino-acid chain: MAEIYDFDKSAWDVKGSIAPIRPKTYSDGRLIPQVRVIDPGFGDRKDECFMYIFLLGIVEDSDPLSPPRGRTFGSLPLGVGKSTAKPEELLKEVTDLDIVVRRTAGLNEKLVFYNNTPLSLLTPWKKILTTGSVFNANQVCNAVNMIPLDTPQRFRVVYMSITRLSDSGYYTVPRKMLEFRSANAVAFNLLVTLEIDRDTEPGRPAAGGLGLSEATFMVHVGNFRRKKNEAYSADYCKMKIEKMGLVFALGGIGGTSLHIRSTGKMSKTLHAQLGFKKTLCYPLMDINEDLNRLLWRSRCKIVRIQAVLQPSVPQEFRIYDDVIINDDQGLFKVL.

This sequence belongs to the morbillivirus/respirovirus/rubulavirus M protein family.

Its subcellular location is the virion. Functionally, the M protein has a crucial role in virus assembly and interacts with the RNP complex as well as with the viral membrane. In Bos indicus (Zebu), this protein is Matrix protein (M).